Here is a 298-residue protein sequence, read N- to C-terminus: Factor-induced gene 1 protein (298 aa).

Helical transmembrane passes span 17 to 37 (IFAL…LIGC), 163 to 183 (VLMA…YVTV), 195 to 215 (FLLL…MWTH), and 243 to 263 (VMAW…WLIF). Phosphoserine is present on Ser288. Thr293 carries the post-translational modification Phosphothreonine. Ser296 is modified (phosphoserine).

It is found in the membrane. Required for efficient mating. This is Factor-induced gene 1 protein (FIG1) from Saccharomyces cerevisiae (strain ATCC 204508 / S288c) (Baker's yeast).